The sequence spans 291 residues: Aspartate carbamoyltransferase catalytic subunit (291 aa).

Residues arginine 49 and threonine 50 each coordinate carbamoyl phosphate. Lysine 77 provides a ligand contact to L-aspartate. Arginine 99, histidine 127, and glutamine 130 together coordinate carbamoyl phosphate. L-aspartate contacts are provided by arginine 160 and arginine 210. The carbamoyl phosphate site is built by glycine 249 and proline 250.

The protein belongs to the aspartate/ornithine carbamoyltransferase superfamily. ATCase family. As to quaternary structure, heterododecamer (2C3:3R2) of six catalytic PyrB chains organized as two trimers (C3), and six regulatory PyrI chains organized as three dimers (R2).

It catalyses the reaction carbamoyl phosphate + L-aspartate = N-carbamoyl-L-aspartate + phosphate + H(+). It functions in the pathway pyrimidine metabolism; UMP biosynthesis via de novo pathway; (S)-dihydroorotate from bicarbonate: step 2/3. Functionally, catalyzes the condensation of carbamoyl phosphate and aspartate to form carbamoyl aspartate and inorganic phosphate, the committed step in the de novo pyrimidine nucleotide biosynthesis pathway. The polypeptide is Aspartate carbamoyltransferase catalytic subunit (Sulfurimonas denitrificans (strain ATCC 33889 / DSM 1251) (Thiomicrospira denitrificans (strain ATCC 33889 / DSM 1251))).